A 199-amino-acid chain; its full sequence is GTP-binding protein Di-Ras2 (199 aa).

Residues 14-21 (GAGGVGKS), 33-39 (RESYIPT), 61-65 (DTTGS), and 121-124 (NKCD) contribute to the GTP site. Phosphoserine is present on S35. The short motif at 36-44 (YIPTVEDTY) is the Effector region element. A Phosphoserine modification is found at S126. GTP is bound at residue 152–153 (AK). Residue C196 is modified to Cysteine methyl ester. The S-geranylgeranyl cysteine moiety is linked to residue C196. Residues 197–199 (VVM) constitute a propeptide, removed in mature form.

It belongs to the small GTPase superfamily. Di-Ras family. Ubiquitinated by the ECS(ASB11) complex via 'Lys-11'-linked ubiquitin chains, leading to its degradation by the proteasome.

It localises to the cell membrane. The enzyme catalyses GTP + H2O = GDP + phosphate + H(+). In terms of biological role, displays low GTPase activity and exists predominantly in the GTP-bound form. The sequence is that of GTP-binding protein Di-Ras2 (Diras2) from Mus musculus (Mouse).